Here is a 573-residue protein sequence, read N- to C-terminus: Methionine--tRNA ligase (573 aa).

The 'HIGH' region motif lies at 10–20 (PYVNSVPHLGN). 4 residues coordinate Zn(2+): cysteine 143, cysteine 146, cysteine 156, and cysteine 159. Residues 333 to 337 (KFSKS) carry the 'KMSKS' region motif. Lysine 336 lines the ATP pocket.

This sequence belongs to the class-I aminoacyl-tRNA synthetase family. MetG type 1 subfamily. Zn(2+) is required as a cofactor.

The protein localises to the cytoplasm. The enzyme catalyses tRNA(Met) + L-methionine + ATP = L-methionyl-tRNA(Met) + AMP + diphosphate. Functionally, is required not only for elongation of protein synthesis but also for the initiation of all mRNA translation through initiator tRNA(fMet) aminoacylation. This is Methionine--tRNA ligase from Saccharolobus solfataricus (strain ATCC 35092 / DSM 1617 / JCM 11322 / P2) (Sulfolobus solfataricus).